The primary structure comprises 37 residues: Large ribosomal subunit protein bL36 (37 aa).

It belongs to the bacterial ribosomal protein bL36 family.

In Oleidesulfovibrio alaskensis (strain ATCC BAA-1058 / DSM 17464 / G20) (Desulfovibrio alaskensis), this protein is Large ribosomal subunit protein bL36 (rpmJ).